The following is an 852-amino-acid chain: DNA mismatch repair protein MutS (852 aa).

602–609 (GPNMSGKS) lines the ATP pocket.

This sequence belongs to the DNA mismatch repair MutS family.

Its function is as follows. This protein is involved in the repair of mismatches in DNA. It is possible that it carries out the mismatch recognition step. This protein has a weak ATPase activity. This Streptococcus thermophilus (strain CNRZ 1066) protein is DNA mismatch repair protein MutS.